The primary structure comprises 203 residues: Ras-related protein RABG3b (203 aa).

Gly-15–Thr-22 serves as a coordination point for GTP. The Effector region motif lies at Tyr-37 to Phe-45. Residues Asp-63–Gln-67, Asn-125–Asp-128, and Ser-158–Ala-159 contribute to the GTP site. 2 S-geranylgeranyl cysteine lipidation sites follow: Cys-201 and Cys-203. Cys-203 carries the post-translational modification Cysteine methyl ester.

This sequence belongs to the small GTPase superfamily. Rab family. In terms of assembly, interacts with VPS39. In terms of tissue distribution, expressed in xylem cells of inflorescence stems.

The protein localises to the cell membrane. Its function is as follows. Intracellular vesicle trafficking and protein transport. Functions in autophagy. Involved in xylem and tracheary element differentiation. This Arabidopsis thaliana (Mouse-ear cress) protein is Ras-related protein RABG3b (RABG3B).